Here is an 884-residue protein sequence, read N- to C-terminus: Formin-like protein 9 (884 aa).

An N-terminal signal peptide occupies residues methionine 1–leucine 19. The chain crosses the membrane as a helical span at residues isoleucine 140–phenylalanine 160. Disordered stretches follow at residues phenylalanine 179–leucine 204, threonine 295–lysine 318, and threonine 403–arginine 473. Low complexity predominate over residues serine 300 to aspartate 310. Residues lysine 429–asparagine 443 are compositionally biased toward pro residues. Positions valine 464–lysine 884 constitute an FH2 domain.

It belongs to the formin-like family. Class-I subfamily.

The protein localises to the membrane. In Oryza sativa subsp. indica (Rice), this protein is Formin-like protein 9 (FH9).